We begin with the raw amino-acid sequence, 405 residues long: Glucan 1,3-beta-glucosidase A (405 aa).

A signal peptide spans 1 to 14 (MLPLLLCIVPYCWS). Glu-199 functions as the Proton donor in the catalytic mechanism. 2 disulfide bridges follow: Cys-280/Cys-405 and Cys-306/Cys-332. Catalysis depends on Glu-298, which acts as the Nucleophile.

This sequence belongs to the glycosyl hydrolase 5 (cellulase A) family. As to quaternary structure, monomer. Mn(2+) is required as a cofactor.

The protein localises to the secreted. It carries out the reaction Successive hydrolysis of beta-D-glucose units from the non-reducing ends of (1-&gt;3)-beta-D-glucans, releasing alpha-glucose.. Functionally, beta-glucanases participate in the metabolism of beta-glucan, the main structural component of the cell wall. It could also function biosynthetically as a transglycosylase. The sequence is that of Glucan 1,3-beta-glucosidase A (exgA) from Aspergillus oryzae (strain ATCC 42149 / RIB 40) (Yellow koji mold).